We begin with the raw amino-acid sequence, 305 residues long: Homoserine kinase (305 aa).

Pro90–Ser100 contributes to the ATP binding site.

It belongs to the GHMP kinase family. Homoserine kinase subfamily.

It localises to the cytoplasm. It carries out the reaction L-homoserine + ATP = O-phospho-L-homoserine + ADP + H(+). It participates in amino-acid biosynthesis; L-threonine biosynthesis; L-threonine from L-aspartate: step 4/5. In terms of biological role, catalyzes the ATP-dependent phosphorylation of L-homoserine to L-homoserine phosphate. The protein is Homoserine kinase of Staphylococcus saprophyticus subsp. saprophyticus (strain ATCC 15305 / DSM 20229 / NCIMB 8711 / NCTC 7292 / S-41).